A 201-amino-acid chain; its full sequence is Recombination protein RecR (201 aa).

The C4-type zinc finger occupies 57 to 72; the sequence is CKLCQIYTEQPLCNIC. The Toprim domain maps to 80–175; it reads TLLCVVESPA…KCSRIAHGVP (96 aa).

The protein belongs to the RecR family.

Its function is as follows. May play a role in DNA repair. It seems to be involved in an RecBC-independent recombinational process of DNA repair. It may act with RecF and RecO. The sequence is that of Recombination protein RecR from Coxiella burnetii (strain RSA 493 / Nine Mile phase I).